Reading from the N-terminus, the 296-residue chain is Malonyl-[acyl-carrier protein] O-methyltransferase (296 aa).

The protein belongs to the methyltransferase superfamily.

The catalysed reaction is malonyl-[ACP] + S-adenosyl-L-methionine = malonyl-[ACP] methyl ester + S-adenosyl-L-homocysteine. It functions in the pathway cofactor biosynthesis; biotin biosynthesis. Its function is as follows. Converts the free carboxyl group of a malonyl-thioester to its methyl ester by transfer of a methyl group from S-adenosyl-L-methionine (SAM). It allows to synthesize pimeloyl-ACP via the fatty acid synthetic pathway. This is Malonyl-[acyl-carrier protein] O-methyltransferase from Methylovorus sp. (strain MP688).